The sequence spans 456 residues: N(6)-adenosine-methyltransferase non-catalytic subunit METTL14 (456 aa).

Basic and acidic residues predominate over residues 39 to 51; that stretch reads DEQREIAETRETS. The disordered stretch occupies residues 39 to 74; that stretch reads DEQREIAETRETSRASYDTSATVSKRKMPEEGEADE. Positions 52–61 are enriched in polar residues; sequence RASYDTSATV. 2 interaction with METTL3 regions span residues 135 to 136 and 237 to 238; these read RD and SG. The interval 245 to 254 is positively charged region required for RNA-binding; that stretch reads RMCLRKWGFR. Interaction with METTL3 stretches follow at residues 255 to 258 and 278 to 287; these read RSED and KAIFQRTKEH. Positions 297 to 298 are positively charged region required for RNA-binding; it reads HR. The segment at 308 to 312 is interaction with METTL3; sequence NVDID. The disordered stretch occupies residues 395-456; the sequence is LRPKTPPPKS…GPHRGVFAPR (62 aa). Residues 410-421 show a composition bias toward gly residues; the sequence is ASRGGGRGGPSA. Residues 423–441 are compositionally biased toward basic and acidic residues; that stretch reads RGERGRERNRGSFRGDRGN.

It belongs to the MT-A70-like family. In terms of assembly, heterodimer; heterodimerizes with mettl3 to form an antiparallel heterodimer that constitutes an active methyltransferase. Component of the WMM complex, a N6-methyltransferase complex composed of a catalytic subcomplex, named MAC, and of an associated subcomplex, named MACOM. The MAC subcomplex is composed of mettl3 and mettl14.

It is found in the nucleus. Functionally, the METTL3-METTL14 heterodimer forms a N6-methyltransferase complex that methylates adenosine residues at the N(6) position of some mRNAs and regulates the circadian clock, differentiation of embryonic stem cells and cortical neurogenesis. In the heterodimer formed with mettl3, mettl14 constitutes the RNA-binding scaffold that recognizes the substrate rather than the catalytic core. N6-methyladenosine (m6A), which takes place at the 5'-[AG]GAC-3' consensus sites of some mRNAs, plays a role in mRNA stability and processing. The polypeptide is N(6)-adenosine-methyltransferase non-catalytic subunit METTL14 (mettl14) (Xenopus tropicalis (Western clawed frog)).